The following is a 495-amino-acid chain: UDP-N-acetylmuramoyl-L-alanyl-D-glutamate--2,6-diaminopimelate ligase (495 aa).

UDP-N-acetyl-alpha-D-muramoyl-L-alanyl-D-glutamate is bound by residues leucine 27, serine 29, and histidine 44–alanine 46. Glycine 116–threonine 122 lines the ATP pocket. UDP-N-acetyl-alpha-D-muramoyl-L-alanyl-D-glutamate is bound by residues asparagine 157, threonine 158–threonine 159, serine 185, glutamine 191, and arginine 193. Residue lysine 225 is modified to N6-carboxylysine. Meso-2,6-diaminopimelate-binding positions include arginine 390, aspartate 414 to arginine 417, glycine 465, and glutamate 469. Residues aspartate 414 to arginine 417 carry the Meso-diaminopimelate recognition motif motif.

It belongs to the MurCDEF family. MurE subfamily. The cofactor is Mg(2+). Post-translationally, carboxylation is probably crucial for Mg(2+) binding and, consequently, for the gamma-phosphate positioning of ATP.

It is found in the cytoplasm. It catalyses the reaction UDP-N-acetyl-alpha-D-muramoyl-L-alanyl-D-glutamate + meso-2,6-diaminopimelate + ATP = UDP-N-acetyl-alpha-D-muramoyl-L-alanyl-gamma-D-glutamyl-meso-2,6-diaminopimelate + ADP + phosphate + H(+). The protein operates within cell wall biogenesis; peptidoglycan biosynthesis. Catalyzes the addition of meso-diaminopimelic acid to the nucleotide precursor UDP-N-acetylmuramoyl-L-alanyl-D-glutamate (UMAG) in the biosynthesis of bacterial cell-wall peptidoglycan. This Salmonella typhimurium (strain LT2 / SGSC1412 / ATCC 700720) protein is UDP-N-acetylmuramoyl-L-alanyl-D-glutamate--2,6-diaminopimelate ligase.